A 381-amino-acid chain; its full sequence is Pulmonary surfactant-associated protein B (381 aa).

A signal peptide spans Met1 to Ala24. In terms of domain architecture, Saposin A-type spans Trp25–Ala65. The propeptide occupies Trp25 to Gln200. Saposin B-type domains are found at residues Ala65–Gln147, Pro204–Asp281, and Arg295–Ser370. 9 disulfide bridges follow: Cys69/Cys143, Cys72/Cys137, Cys100/Cys112, Cys208/Cys277, Cys211/Cys271, Cys235/Cys246, Cys299/Cys366, Cys302/Cys360, and Cys325/Cys335. N-linked (GlcNAc...) asparagine glycosylation occurs at Asn129. The propeptide occupies Asp280–Leu381. A glycan (N-linked (GlcNAc...) asparagine) is linked at Asn311.

As to quaternary structure, homodimer; disulfide-linked.

Its subcellular location is the secreted. The protein localises to the extracellular space. It is found in the surface film. In terms of biological role, pulmonary surfactant-associated proteins promote alveolar stability by lowering the surface tension at the air-liquid interface in the peripheral air spaces. SP-B increases the collapse pressure of palmitic acid to nearly 70 millinewtons per meter. This chain is Pulmonary surfactant-associated protein B (SFTPB), found in Homo sapiens (Human).